The chain runs to 1275 residues: MSQFSKDQVQDMYYLSPMQEGMLFHAILNPGQSFYLEQITMKVKGSLNIKCLEESMNVIMDRYDVFRTVFIHEKVKRPVQVVLKKRQFHIEEIDLTHLTGSEQTAKINEYKEQDKIRGFDLTRDIPMRAAIFKKAEESFEWVWSYHHIILDGWCFGIVVQDLFKVYNALREQKPYSLPPVKPYKDYIKWLEKQDKQASLRYWREYLEGFEGQTTFAEQRKKQKDGYEPKELLFSLSEAETKAFTELAKSQHTTLSTALQAVWSVLISRYQQSGDLAFGTVVSGRPAEIKGVEHMVGLFINVVPRRVKLSEGITFNGLLKRLQEQSLQSEPHQYVPLYDIQSQADQPKLIDHIIVFENYPLQDAKNEESSENGFDMVDVHVFEKSNYDLNLMASPGDEMLIKLAYNENVFDEAFILRLKSQLLTAIQQLIQNPDQPVSTINLVDDREREFLLTGLNPPAQAHETKPLTYWFKEAVNANPDAPALTYSGQTLSYRELDEEANRIARRLQKHGAGKGSVVALYTKRSLELVIGILGVLKAGAAYLPVDPKLPEDRISYMLADSAAACLLTHQEMKEQAAELPYTGTTLFIDDQTRFEEQASDPATAIDPNDPAYIMYTSGTTGKPKGNITTHANIQGLVKHVDYMAFSDQDTFLSVSNYAFDAFTFDFYASMLNAARLIIADEHTLLDTERLTDLILQENVNVMFATTALFNLLTDAGEDWMKGLRCILFGGERASVPHVRKALRIMGPGKLINCYGPTEGTVFATAHVVHDLPDSISSLPIGKPISNASVYILNEQSQLQPFGAVGELCISGMGVSKGYVNRADLTKEKFIENPFKPGETLYRTGDLARWLPDGTIEYAGRIDDQVKIRGHRIELEEIEKQLQEYPGVKDAVVVADRHESGDASINAYLVNRTQLSAEDVKAHLKKQLPAYMVPQTFTFLDELPLTTNGKVNKRLLPKPDQDQLAEEWIGPRNEMEETIAQIWSEVLGRKQIGIHDDFFALGGHSLKAMTAASRIKKELGIDLPVKLLFEAPTIAGISAYLKNGGSDGLQDVTIMNQDQEQIIFAFPPVLGYGLMYQNLSSRLPSYKLCAFDFIEEEDRLDRYADLIQKLQPEGPLTLFGYSAGCSLAFEAAKKLEEQGRIVQRIIMVDSYKKQGVSDLDGRTVESDVEALMNVNRDNEALNSEAVKHGLKQKTHAFYSYYVNLISTGQVKADIDLLTSGADFDMPEWLASWEEATTGVYRVKRGFGTHAEMLQGETLDRNAEILLEFLNTQTVTVS.

The 76-residue stretch at 968-1043 (GPRNEMEETI…GISAYLKNGG (76 aa)) folds into the Carrier domain. Serine 1003 carries the O-(pantetheine 4'-phosphoryl)serine modification. Positions 1059-1271 (QIIFAFPPVL…ILLEFLNTQT (213 aa)) are thioesterase. Catalysis depends on residues serine 1120, aspartate 1147, and histidine 1247.

It belongs to the ATP-dependent AMP-binding enzyme family. Requires pantetheine 4'-phosphate as cofactor.

Its pathway is antibiotic biosynthesis; surfactin biosynthesis. Probably activates a leucine. This chain is Surfactin synthase subunit 3 (srfAC), found in Bacillus subtilis (strain 168).